The following is a 128-amino-acid chain: UPF0325 protein YaeH (128 aa).

It belongs to the UPF0325 family.

The chain is UPF0325 protein YaeH from Escherichia coli (strain ATCC 8739 / DSM 1576 / NBRC 3972 / NCIMB 8545 / WDCM 00012 / Crooks).